The following is a 572-amino-acid chain: Cytochrome P450 monooxygenase xilC (572 aa).

A heme-binding site is contributed by Cys515.

Belongs to the cytochrome P450 family. Heme is required as a cofactor.

It participates in secondary metabolite biosynthesis. In terms of biological role, cytochrome P450 monooxygenase; part of the gene cluster that mediates the biosynthesis of the 6-methyl-2-pyrone derivative xylariolide D. XilC hydroxylates the 5-alkyl-6-methyl-2-pyrone backbone called prexylariolide D, produced by the highly reducing polyketide synthase xilA, on its side chain to form xylariolide D. This chain is Cytochrome P450 monooxygenase xilC, found in Penicillium rubens (strain ATCC 28089 / DSM 1075 / NRRL 1951 / Wisconsin 54-1255) (Penicillium chrysogenum).